Reading from the N-terminus, the 323-residue chain is L-lactate dehydrogenase (323 aa).

NAD(+) is bound by residues V18, D39, R44, Y69, and 83–84; that span reads GA. Residues Q86 and R92 each coordinate substrate. Residues T105, 122 to 124, and S147 each bind NAD(+); that span reads AAN. A substrate-binding site is contributed by 124-127; sequence NPVD. A substrate-binding site is contributed by 152–155; sequence DTAR. Residue H179 is the Proton acceptor of the active site. Y223 is modified (phosphotyrosine). Substrate is bound at residue T232.

It belongs to the LDH/MDH superfamily. LDH family. As to quaternary structure, homotetramer.

The protein resides in the cytoplasm. The enzyme catalyses (S)-lactate + NAD(+) = pyruvate + NADH + H(+). The protein operates within fermentation; pyruvate fermentation to lactate; (S)-lactate from pyruvate: step 1/1. Its function is as follows. Catalyzes the conversion of lactate to pyruvate. The chain is L-lactate dehydrogenase from Pediococcus acidilactici.